The chain runs to 216 residues: Histone doublet H4-H3 (216 aa).

Residues M1 to Q12 are compositionally biased toward basic residues. Residues M1–G23 are disordered.

The protein resides in the host nucleus. It localises to the host cytoplasm. Its subcellular location is the virion. Histone-like protein that is recruited to viral factories during viral replication and participates in viral DNA packaging and virion production probably by forming unstable nucleosome-like particles. May compact the viral DNA. This chain is Histone doublet H4-H3, found in Melbournevirus (MelV).